Here is a 184-residue protein sequence, read N- to C-terminus: Protein Syd (184 aa).

This sequence belongs to the Syd family.

The protein resides in the cell inner membrane. In terms of biological role, interacts with the SecY protein in vivo. May bind preferentially to an uncomplexed state of SecY, thus functioning either as a chelating agent for excess SecY in the cell or as a regulatory factor that negatively controls the translocase function. The chain is Protein Syd from Photorhabdus laumondii subsp. laumondii (strain DSM 15139 / CIP 105565 / TT01) (Photorhabdus luminescens subsp. laumondii).